Here is a 432-residue protein sequence, read N- to C-terminus: Adenosine 3'-phospho 5'-phosphosulfate transporter 1 (432 aa).

9 consecutive transmembrane segments (helical) span residues 5–25 (WWAV…ETPE), 40–60 (VVNA…VQYF), 109–129 (ALKL…WGVL), 154–174 (FLVL…CVLC), 238–258 (WEYL…LSSG), 265–285 (PATT…DSFT), 299–319 (SVQM…GSLL), 353–373 (LFIF…IMTL), and 387–407 (GHTV…ALLL). Position 427 is a phosphoserine (Ser-427).

The protein belongs to the nucleotide-sugar transporter family. SLC35B subfamily.

The protein resides in the golgi apparatus membrane. The catalysed reaction is 3'-phosphoadenylyl sulfate(in) + adenosine 3',5'-bisphosphate(out) = 3'-phosphoadenylyl sulfate(out) + adenosine 3',5'-bisphosphate(in). Its function is as follows. Probably functions as a 3'-phosphoadenylyl sulfate:adenosine 3',5'-bisphosphate antiporter at the Golgi membranes. Mediates the transport from the cytosol into the lumen of the Golgi of 3'-phosphoadenylyl sulfate/adenosine 3'-phospho 5'-phosphosulfate (PAPS), a universal sulfuryl donor for sulfation events that take place in that compartment. This Pongo abelii (Sumatran orangutan) protein is Adenosine 3'-phospho 5'-phosphosulfate transporter 1.